The primary structure comprises 283 residues: Capsid fiber protein (283 aa).

Belongs to the phi29likevirus major capsid fiber protein family. Homotrimer. Forms a super helix coiled coil in the homotrimer.

Its subcellular location is the virion. Protein that forms the 55 capsid fibers. These fibers are not always present and may have been lost in some lab strains. They may enhance the attachment of the virions onto the host cell wall. This Bacillus subtilis (Bacteriophage B103) protein is Capsid fiber protein (8.5).